We begin with the raw amino-acid sequence, 491 residues long: Anthranilate synthase component 1 (491 aa).

L-tryptophan-binding positions include Ser49 and 271 to 273; that span reads PYL. 306-307 provides a ligand contact to chorismate; the sequence is GT. Glu333 contributes to the Mg(2+) binding site. Chorismate-binding positions include Tyr421, Arg441, 455–457, and Gly457; that span reads GAG. Glu470 is a binding site for Mg(2+).

It belongs to the anthranilate synthase component I family. As to quaternary structure, heterotetramer consisting of two non-identical subunits: a beta subunit (TrpG) and a large alpha subunit (TrpE). It depends on Mg(2+) as a cofactor.

It carries out the reaction chorismate + L-glutamine = anthranilate + pyruvate + L-glutamate + H(+). The protein operates within amino-acid biosynthesis; L-tryptophan biosynthesis; L-tryptophan from chorismate: step 1/5. Feedback inhibited by tryptophan. Its function is as follows. Part of a heterotetrameric complex that catalyzes the two-step biosynthesis of anthranilate, an intermediate in the biosynthesis of L-tryptophan. In the first step, the glutamine-binding beta subunit (TrpG) of anthranilate synthase (AS) provides the glutamine amidotransferase activity which generates ammonia as a substrate that, along with chorismate, is used in the second step, catalyzed by the large alpha subunit of AS (TrpE) to produce anthranilate. In the absence of TrpG, TrpE can synthesize anthranilate directly from chorismate and high concentrations of ammonia. The polypeptide is Anthranilate synthase component 1 (trpE) (Neisseria meningitidis serogroup A / serotype 4A (strain DSM 15465 / Z2491)).